Here is a 132-residue protein sequence, read N- to C-terminus: Large ribosomal subunit protein uL24 (132 aa).

It belongs to the universal ribosomal protein uL24 family. As to quaternary structure, part of the 50S ribosomal subunit.

One of two assembly initiator proteins, it binds directly to the 5'-end of the 23S rRNA, where it nucleates assembly of the 50S subunit. Functionally, located at the polypeptide exit tunnel on the outside of the subunit. This chain is Large ribosomal subunit protein uL24, found in Aeropyrum pernix (strain ATCC 700893 / DSM 11879 / JCM 9820 / NBRC 100138 / K1).